Here is a 445-residue protein sequence, read N- to C-terminus: O-fucosyltransferase 23 (445 aa).

The helical; Signal-anchor for type II membrane protein transmembrane segment at Ile12 to Leu34 threads the bilayer. Residues Asn97 and Asn179 are each glycosylated (N-linked (GlcNAc...) asparagine). His258–Arg260 lines the substrate pocket. Asn294 is a glycosylation site (N-linked (GlcNAc...) asparagine). Thr374 to Phe375 is a binding site for substrate. The N-linked (GlcNAc...) asparagine glycan is linked to Asn424.

The protein belongs to the glycosyltransferase GT106 family. In terms of tissue distribution, expressed in dry pollen grains and germinating pollen grains.

It is found in the golgi apparatus membrane. Its pathway is glycan metabolism. Probable protein O-fucosyltransferase required for correct pollen tube penetration through the stigma-style interface. May be involved in protein O-glycosylation events during pollen-pistil interactions. In Arabidopsis thaliana (Mouse-ear cress), this protein is O-fucosyltransferase 23.